We begin with the raw amino-acid sequence, 1373 residues long: Insulin-like growth factor 1 receptor (1373 aa).

Residues 1-30 (MKSGSGGGSPTSLWGLVFLSAALSLWPTSG) form the signal peptide. Residues Cys33 and Cys52 are joined by a disulfide bond. Asn51, Asn102, and Asn135 each carry an N-linked (GlcNAc...) asparagine glycan. 13 disulfide bridges follow: Cys150–Cys178, Cys182–Cys205, Cys192–Cys211, Cys215–Cys224, Cys219–Cys230, Cys231–Cys239, Cys235–Cys248, Cys251–Cys260, Cys264–Cys276, Cys282–Cys303, Cys307–Cys321, Cys324–Cys328, and Cys332–Cys354. An N-linked (GlcNAc...) asparagine glycan is attached at Asn245. A glycan (N-linked (GlcNAc...) asparagine) is linked at Asn314. 2 N-linked (GlcNAc...) asparagine glycosylation sites follow: Asn418 and Asn439. Residues Cys456 and Cys489 are joined by a disulfide bond. Fibronectin type-III domains lie at 490 to 610 (ESDV…TNAS), 611 to 709 (VPSI…TEAE), 735 to 829 (RPER…TMPA), and 835 to 928 (IPGP…VPAK). N-linked (GlcNAc...) asparagine glycans are attached at residues Asn535, Asn608, Asn623, Asn641, Asn748, Asn757, Asn765, Asn901, and Asn914. Over 742 to 936 (DVMQVANTTM…AKTTYENFMH (195 aa)) the chain is Extracellular. The chain crosses the membrane as a helical span at residues 937–960 (LIIALPVAILLIVGGLVIMLYVFH). Residues 961 to 1373 (RKRNNSRLGN…ALPLPQSSTC (413 aa)) lie on the Cytoplasmic side of the membrane. Positions 978-981 (NPEY) match the IRS1- and SHC1-binding motif. Tyr981 is modified (phosphotyrosine). Positions 1000–1276 (ITMNRELGQG…SIKDEMEPSF (277 aa)) constitute a Protein kinase domain. ATP contacts are provided by residues 1006 to 1014 (LGQGSFGMV) and Lys1034. The active-site Proton acceptor is the Asp1137. Phosphotyrosine; by autocatalysis occurs at positions 1163, 1167, and 1168. Glycyl lysine isopeptide (Lys-Gly) (interchain with G-Cter in ubiquitin) cross-links involve residues Lys1170 and Lys1173. Ser1280 is subject to Phosphoserine; by GSK3-beta. The tract at residues 1283-1373 (YSEENKPPEP…ALPLPQSSTC (91 aa)) is disordered. Ser1284 bears the Phosphoserine mark. The segment covering 1292-1305 (PEELEMELEMEPEN) has biased composition (acidic residues). Over residues 1306–1322 (MESVPLDPSASSASLPL) the composition is skewed to low complexity. Positions 1323-1332 (PERHSGHKAE) are enriched in basic and acidic residues.

The protein belongs to the protein kinase superfamily. Tyr protein kinase family. Insulin receptor subfamily. In terms of assembly, tetramer of 2 alpha and 2 beta chains linked by disulfide bonds. The alpha chains contribute to the formation of the ligand-binding domain, while the beta chain carries the kinase domain. Interacts with PIK3R1 and with the PTB/PID domains of IRS1 and SHC1 in vitro when autophosphorylated on tyrosine residues. Forms a hybrid receptor with INSR, the hybrid is a tetramer consisting of 1 alpha chain and 1 beta chain of INSR and 1 alpha chain and 1 beta chain of IGF1R. Interacts with ARRB1 and ARRB2. Interacts with GRB10. Interacts with RACK1. Interacts with SOCS1, SOCS2 and SOCS3. Interacts with 14-3-3 proteins. Interacts with NMD2. Interacts with MAP3K5. Interacts with STAT3. Found in a ternary complex with IGF1 and ITGAV:ITGB3 or ITGA6:ITGB4. Interacts (nascent precursor form) with ZFAND2B. In terms of processing, autophosphorylated on tyrosine residues in response to ligand binding. Autophosphorylation occurs in trans, i.e. one subunit of the dimeric receptor phosphorylates tyrosine residues on the other subunit. Autophosphorylation occurs in a sequential manner; Tyr-1167 is predominantly phosphorylated first, followed by phosphorylation of Tyr-1163 and Tyr-1168. While every single phosphorylation increases kinase activity, all three tyrosine residues in the kinase activation loop (Tyr-1163, Tyr-1167 and Tyr-1168) have to be phosphorylated for optimal activity. Can be autophosphorylated at additional tyrosine residues (in vitro). Autophosphorylated is followed by phosphorylation of juxtamembrane tyrosines and C-terminal serines. May also be phosphorylated at Tyr-1163 and Tyr-1168 by mTORC2. Phosphorylation of Tyr-981 is required for IRS1- and SHC1-binding. Phosphorylation of Ser-1280 by GSK-3beta restrains kinase activity and promotes cell surface expression, it requires a priming phosphorylation at Ser-1284. Dephosphorylated by PTPN1. Post-translationally, polyubiquitinated at Lys-1170 and Lys-1173 through both 'Lys-48' and 'Lys-29' linkages, promoting receptor endocytosis and subsequent degradation by the proteasome. Ubiquitination is facilitated by pre-existing phosphorylation. Sumoylated with SUMO1. In terms of processing, controlled by regulated intramembrane proteolysis (RIP). Undergoes metalloprotease-dependent constitutive ectodomain shedding to produce a membrane-anchored 52 kDa C-Terminal fragment which is further processed by presenilin gamma-secretase to yield an intracellular 50 kDa fragment.

The protein resides in the cell membrane. The enzyme catalyses L-tyrosyl-[protein] + ATP = O-phospho-L-tyrosyl-[protein] + ADP + H(+). Activated by autophosphorylation at Tyr-1163, Tyr-1167 and Tyr-1168 on the kinase activation loop; phosphorylation at all three tyrosine residues is required for optimal kinase activity. Inhibited by MSC1609119A-1, BMS-754807, PQIP, benzimidazole pyridinone, isoquinolinedione, bis-azaindole, 3-cyanoquinoline, 2,4-bis-arylamino-1,3-pyrimidine, pyrrolopyrimidine, pyrrole-5-carboxaldehyde, picropodophyllin (PPP), tyrphostin derivatives. While most inhibitors bind to the ATP binding pocket, MSC1609119A-1 functions as allosteric inhibitor and binds close to the DFG motif and the activation loop. Functionally, receptor tyrosine kinase which mediates actions of insulin-like growth factor 1 (IGF1). Binds IGF1 with high affinity and IGF2 and insulin (INS) with a lower affinity. The activated IGF1R is involved in cell growth and survival control. IGF1R is crucial for tumor transformation and survival of malignant cell. Ligand binding activates the receptor kinase, leading to receptor autophosphorylation, and tyrosines phosphorylation of multiple substrates, that function as signaling adapter proteins including, the insulin-receptor substrates (IRS1/2), Shc and 14-3-3 proteins. Phosphorylation of IRSs proteins lead to the activation of two main signaling pathways: the PI3K-AKT/PKB pathway and the Ras-MAPK pathway. The result of activating the MAPK pathway is increased cellular proliferation, whereas activating the PI3K pathway inhibits apoptosis and stimulates protein synthesis. Phosphorylated IRS1 can activate the 85 kDa regulatory subunit of PI3K (PIK3R1), leading to activation of several downstream substrates, including protein AKT/PKB. AKT phosphorylation, in turn, enhances protein synthesis through mTOR activation and triggers the antiapoptotic effects of IGFIR through phosphorylation and inactivation of BAD. In parallel to PI3K-driven signaling, recruitment of Grb2/SOS by phosphorylated IRS1 or Shc leads to recruitment of Ras and activation of the ras-MAPK pathway. In addition to these two main signaling pathways IGF1R signals also through the Janus kinase/signal transducer and activator of transcription pathway (JAK/STAT). Phosphorylation of JAK proteins can lead to phosphorylation/activation of signal transducers and activators of transcription (STAT) proteins. In particular activation of STAT3, may be essential for the transforming activity of IGF1R. The JAK/STAT pathway activates gene transcription and may be responsible for the transforming activity. JNK kinases can also be activated by the IGF1R. IGF1 exerts inhibiting activities on JNK activation via phosphorylation and inhibition of MAP3K5/ASK1, which is able to directly associate with the IGF1R. When present in a hybrid receptor with INSR, binds IGF1. This chain is Insulin-like growth factor 1 receptor (Igf1r), found in Mus musculus (Mouse).